The primary structure comprises 20 residues: Short cationic peptide-4b (20 aa).

Glutamate 20 is subject to Glutamic acid 1-amide.

As to expression, expressed by the venom gland.

It is found in the secreted. The polypeptide is Short cationic peptide-4b (Cupiennius salei (American wandering spider)).